The following is a 212-amino-acid chain: Cyclin-P4-1 (212 aa).

The protein belongs to the cyclin family. Cyclin U/P subfamily.

In Oryza sativa subsp. japonica (Rice), this protein is Cyclin-P4-1 (CYCP4-1).